Consider the following 298-residue polypeptide: 4-hydroxy-tetrahydrodipicolinate synthase (298 aa).

Residue T51 coordinates pyruvate. Y140 serves as the catalytic Proton donor/acceptor. The active-site Schiff-base intermediate with substrate is the K168. Residue I210 coordinates pyruvate.

The protein belongs to the DapA family. In terms of assembly, homotetramer; dimer of dimers.

The protein localises to the cytoplasm. The enzyme catalyses L-aspartate 4-semialdehyde + pyruvate = (2S,4S)-4-hydroxy-2,3,4,5-tetrahydrodipicolinate + H2O + H(+). The protein operates within amino-acid biosynthesis; L-lysine biosynthesis via DAP pathway; (S)-tetrahydrodipicolinate from L-aspartate: step 3/4. Its function is as follows. Catalyzes the condensation of (S)-aspartate-beta-semialdehyde [(S)-ASA] and pyruvate to 4-hydroxy-tetrahydrodipicolinate (HTPA). This chain is 4-hydroxy-tetrahydrodipicolinate synthase, found in Acidovorax sp. (strain JS42).